A 601-amino-acid polypeptide reads, in one-letter code: MGSAALRCFCYGCLFTSVTWTLLLFIYFNFSEESQGFRHVPVKGLEPYKPLPKKIYPRFSRDSMGQHSDPRKGHNGNQLETEANADLSPELGMIFNEQDQDVRDVGYQKHAFNLLISNRLGYHRDVPDTRDSKCAKKTYPPDLPMASIVICFYNEAFSALLRTVHSVLDRTPAQLLHEIILVDDNSELDDLKKDLDGYMQENLSKKVKLVRNKQREGLIRGRMVGASHATGDVLVFLDSHCEVNEMWLQPLLAPIKENPRTVVCPVIDIISADTLIYSSSPVVRGGFNWGLHFKWDPVPLAELGGPEGFSAPFRSPTMAGGLFAMDREYFNMLGQYDSGMDIWGGENLEISFRIWMCGGSLLIVPCSRVGHIFRKRRPYGSPGGHDTMAHNSLRLAHVWMDEYKDQYFALRPELRNRDFGDIRERLALRRRLNCKSFKWYLDNIYPEMQVSGPNAKPQPPVFMNKGQKRPKILQRGRLINMQTNRCLVAQGHPSQKGGLVVAKECDYNDSEQVWSYNEEHELILSNLLCLDMSETRSSDPPRLMKCHGSGGSQQWVFGKSNRLYQVSVGQCLKLVDPMSRKGYVSMAICDGSPSQQWHLEN.

At 1 to 7 (MGSAALR) the chain is on the cytoplasmic side. The chain crosses the membrane as a helical; Signal-anchor for type II membrane protein span at residues 8–28 (CFCYGCLFTSVTWTLLLFIYF). N-linked (GlcNAc...) asparagine glycosylation is found at Asn29 and Asn202. At 29–601 (NFSEESQGFR…SPSQQWHLEN (573 aa)) the chain is on the lumenal side. Residues 143–254 (LPMASIVICF…EMWLQPLLAP (112 aa)) form a catalytic subdomain A region. Positions 312-374 (PFRSPTMAGG…PCSRVGHIFR (63 aa)) are catalytic subdomain B. The Ricin B-type lectin domain maps to 469–600 (RPKILQRGRL…GSPSQQWHLE (132 aa)). The cysteines at positions 486 and 505 are disulfide-linked. Asn508 carries an N-linked (GlcNAc...) asparagine glycan. Disulfide bonds link Cys529–Cys546 and Cys571–Cys589.

The protein belongs to the glycosyltransferase 2 family. GalNAc-T subfamily. In terms of assembly, interacts with notch1. Mn(2+) serves as cofactor. The cofactor is Ca(2+).

The protein resides in the golgi apparatus membrane. It catalyses the reaction L-seryl-[protein] + UDP-N-acetyl-alpha-D-galactosamine = a 3-O-[N-acetyl-alpha-D-galactosaminyl]-L-seryl-[protein] + UDP + H(+). The catalysed reaction is L-threonyl-[protein] + UDP-N-acetyl-alpha-D-galactosamine = a 3-O-[N-acetyl-alpha-D-galactosaminyl]-L-threonyl-[protein] + UDP + H(+). The protein operates within protein modification; protein glycosylation. Functionally, polypeptide N-acetylgalactosaminyltransferase that catalyzes the initiation of protein O-linked glycosylation and is involved in left/right asymmetry by mediating O-glycosylation of NOTCH1. O-glycosylation of NOTCH1 promotes activation of NOTCH1, modulating the balance between motile and immotile (sensory) cilia at the left-right organiser (LRO). Polypeptide N-acetylgalactosaminyltransferases catalyze the transfer of an N-acetyl-D-galactosamine residue to a serine or threonine residue on the protein receptor. In Xenopus tropicalis (Western clawed frog), this protein is Polypeptide N-acetylgalactosaminyltransferase 11 (galnt11).